The following is a 142-amino-acid chain: Probable signal recognition particle 19 kDa protein (142 aa).

Residues 115–142 (KTRQPGYTAPSVASSSAAAAGKKNKKKK) form a disordered region. Low complexity predominate over residues 123 to 135 (APSVASSSAAAAG).

Belongs to the SRP19 family. As to quaternary structure, component of a signal recognition particle complex that consists of a 7SL RNA molecule of 300 nucleotides and six protein subunits: srpa-72, srpa-68, SRP54, F37F2.2/SRP19, F25G6.8/SRP14 and ZK512.4/SRP9.

The protein resides in the cytoplasm. Its subcellular location is the nucleus. It localises to the nucleolus. Component of the signal recognition particle (SRP) complex, a ribonucleoprotein complex that mediates the cotranslational targeting of secretory and membrane proteins to the endoplasmic reticulum (ER). Binds directly to 7SL RNA. Mediates binding of SRP54 to the SRP complex. The protein is Probable signal recognition particle 19 kDa protein of Caenorhabditis elegans.